Reading from the N-terminus, the 199-residue chain is 5'-deoxynucleotidase HDDC2 (199 aa).

An N-acetylalanine modification is found at alanine 2. Serine 5 is subject to Phosphoserine. One can recognise an HD domain in the interval 41–143 (VSDHMYRMAV…VKQLDQCEMI (103 aa)). A divalent metal cation contacts are provided by histidine 44, histidine 72, aspartate 73, glutamate 76, aspartate 81, isoleucine 82, and aspartate 138. Phosphoserine is present on serine 199.

Belongs to the HDDC2 family. As to quaternary structure, homodimer. Requires Mn(2+) as cofactor. Co(2+) serves as cofactor. It depends on Mg(2+) as a cofactor.

It carries out the reaction a 2'-deoxyribonucleoside 5'-phosphate + H2O = a 2'-deoxyribonucleoside + phosphate. Its function is as follows. Catalyzes the dephosphorylation of the nucleoside 5'-monophosphates deoxyadenosine monophosphate (dAMP), deoxycytidine monophosphate (dCMP), deoxyguanosine monophosphate (dGMP) and deoxythymidine monophosphate (dTMP). This chain is 5'-deoxynucleotidase HDDC2 (Hddc2), found in Mus musculus (Mouse).